The following is a 189-amino-acid chain: Interferon alpha-1 (189 aa).

Residues 1–23 (MAPAWSLLLALLLLSCNAICSLG) form the signal peptide. Intrachain disulfides connect cysteine 24/cysteine 122 and cysteine 52/cysteine 162.

It belongs to the alpha/beta interferon family. Interacts with CR2.

Its subcellular location is the secreted. Produced by macrophages, IFN-alpha have antiviral activities. Interferon stimulates the production of two enzymes: a protein kinase and an oligoadenylate synthetase. This is Interferon alpha-1 from Bos taurus (Bovine).